We begin with the raw amino-acid sequence, 873 residues long: DNA mismatch repair protein MutS (873 aa).

628–635 (GPNMAGKS) contacts ATP.

This sequence belongs to the DNA mismatch repair MutS family.

Functionally, this protein is involved in the repair of mismatches in DNA. It is possible that it carries out the mismatch recognition step. This protein has a weak ATPase activity. The polypeptide is DNA mismatch repair protein MutS (Chlorobium chlorochromatii (strain CaD3)).